The primary structure comprises 454 residues: Nuclear distribution protein PAC1-1 (454 aa).

The 33-residue stretch at 9 to 41 (QAEELHRALIAYLSSNNLTSTAAALRAEIGLGE) folds into the LisH domain. The segment at 71–93 (RHTSQLSNATPTSRQNKDPVNWL) is disordered. The segment covering 73 to 84 (TSQLSNATPTSR) has biased composition (polar residues). WD repeat units lie at residues 104–145 (SHRQ…RTIK), 147–187 (HTKT…KNIR), 191–236 (GHDH…CVKT), 239–278 (GHAE…PEPK), 283–342 (GHEH…IKIL), 344–383 (GHDN…RCVK), and 388–450 (AHAH…LNVR).

This sequence belongs to the WD repeat LIS1/nudF family. Self-associates. Interacts with NDL1 and dynein.

Its subcellular location is the cytoplasm. It localises to the cytoskeleton. It is found in the spindle pole. Functionally, positively regulates the activity of the minus-end directed microtubule motor protein dynein. May enhance dynein-mediated microtubule sliding by targeting dynein to the microtubule plus end. Required for nuclear migration during vegetative growth as well as development. Required for retrograde early endosome (EE) transport from the hyphal tip. Required for localization of dynein to the mitotic spindle poles. Recruits additional proteins to the dynein complex at SPBs. This is Nuclear distribution protein PAC1-1 from Chaetomium globosum (strain ATCC 6205 / CBS 148.51 / DSM 1962 / NBRC 6347 / NRRL 1970) (Soil fungus).